The sequence spans 333 residues: MDQSRMTLGRFLAQQCPQDEKGKALALLLRQVGDSCRRIADAVAGGALREMTGAADNVNVQGEEQKKLDVFANDVLIEGCNWGGTVAGMASEEEDDIYTLPEGEPRGPWLLLFDPLDGSSNIDVNVSVGTIFSVLPAPDTGRDPVNEDLLQPGHRQVAAGYAVYGPSTVLVLTLGDGVYAFTLDRGQGEWFLTSSKMKVPEQTAEFAINCSYQRIWPAPIKRYIEECLDGEEGPRGKRFNMRWIASMVADLHRIFTRGGVFLYPADEKRPNGRLRVLYEINPMSMLMEQAGGEAFTGKERALDLQPEALHQRSGLMLGSREEVEVLRRYYAEQ.

Positions 92, 114, 116, and 117 each coordinate Mg(2+). Residues aspartate 117–serine 120 and asparagine 209 contribute to the substrate site. Residue glutamate 279 coordinates Mg(2+).

Belongs to the FBPase class 1 family. Homotetramer. The cofactor is Mg(2+).

It localises to the cytoplasm. It catalyses the reaction beta-D-fructose 1,6-bisphosphate + H2O = beta-D-fructose 6-phosphate + phosphate. The protein operates within carbohydrate biosynthesis; gluconeogenesis. The chain is Fructose-1,6-bisphosphatase class 1 from Alkalilimnicola ehrlichii (strain ATCC BAA-1101 / DSM 17681 / MLHE-1).